Reading from the N-terminus, the 788-residue chain is Integrin beta-6 (788 aa).

The signal sequence occupies residues 1–21 (MGIELLCLFFLFLGRNDHVQG). In terms of domain architecture, PSI spans 22–71 (GCALGGAETCEDCLLIGPQCAWCSQENFTYLSGVGERCDTPANLLAKGCQ). At 22–709 (GCALGGAETC…KDCPKPPNSP (688 aa)) the chain is on the extracellular side. 28 disulfides stabilise this stretch: C23/C41, C31/C454, C34/C59, C44/C70, C197/C204, C252/C293, C394/C406, C426/C452, C456/C476, C467/C479, C481/C490, C492/C519, C502/C517, C511/C522, C524/C537, C539/C560, C544/C558, C552/C563, C565/C574, C576/C599, C583/C597, C591/C602, C604/C614, C617/C620, C624/C670, C630/C649, C633/C645, and C678/C702. N-linked (GlcNAc...) asparagine glycosylation is found at N48 and N97. The VWFA domain occupies 131–371 (YPVDLYYLMD…QLIISAYEEL (241 aa)). D140, S142, and S144 together coordinate Mg(2+). Residues S144, D147, D148, and E179 each coordinate Ca(2+). Positions 235, 237, 239, and 240 each coordinate Ca(2+). Position 240 (E240) interacts with Mg(2+). N260 carries an N-linked (GlcNAc...) asparagine glycan. 2 residues coordinate Ca(2+): D271 and K355. N-linked (GlcNAc...) asparagine glycosylation occurs at N387. An N-linked (GlcNAc...) asparagine glycan is attached at N418. I-EGF domains follow at residues 456-491 (CQKE…PHCE), 492-538 (CGED…PYCQ), 539-575 (CDDF…EYCN), and 576-615 (CTTS…LTCE). Residues N463 and N471 are each glycosylated (N-linked (GlcNAc...) asparagine). The chain crosses the membrane as a helical span at residues 710-730 (MIMLGVSLAILLIGVVLLCIW). The segment at 731–758 (KLLVSFHDRKEVAKFEAERSKAKWQTGT) is interaction with HAX1. At 731 to 788 (KLLVSFHDRKEVAKFEAERSKAKWQTGTNPLYRGSTSTFKNVTYKHREKQKVDLSMDG) the chain is on the cytoplasmic side.

This sequence belongs to the integrin beta chain family. Heterodimer of an alpha and a beta subunit. Interacts with FLNB. Interacts with HAX1. ITGAV:ITGB6 interacts with FBN1. ITGAV:ITGB6 interacts with TGFB1.

The protein localises to the cell membrane. Its subcellular location is the cell junction. It is found in the focal adhesion. Its function is as follows. Integrin alpha-V:beta-6 (ITGAV:ITGB6) is a receptor for fibronectin and cytotactin. It recognizes the sequence R-G-D in its ligands. ITGAV:ITGB6 acts as a receptor for fibrillin-1 (FBN1) and mediates R-G-D-dependent cell adhesion to FBN1. Integrin alpha-V:beta-6 (ITGAV:ITGB6) mediates R-G-D-dependent release of transforming growth factor beta-1 (TGF-beta-1) from regulatory Latency-associated peptide (LAP), thereby playing a key role in TGF-beta-1 activation. This chain is Integrin beta-6 (ITGB6), found in Sus scrofa (Pig).